Here is a 227-residue protein sequence, read N- to C-terminus: Large ribosomal subunit protein uL10c (227 aa).

The N-terminal 47 residues, M1 to S47, are a transit peptide targeting the chloroplast.

The protein belongs to the universal ribosomal protein uL10 family. As to quaternary structure, part of the 50S ribosomal subunit.

The protein resides in the plastid. The protein localises to the chloroplast. Functionally, this protein binds directly to 23S ribosomal RNA. The protein is Large ribosomal subunit protein uL10c (RPL10) of Nicotiana tabacum (Common tobacco).